A 233-amino-acid chain; its full sequence is Defense protein 3 (233 aa).

The signal sequence occupies residues 1–17 (MFGKFVLLAVLLVGVNS). Residues 18–45 (RYVIIEDPVYYIEDHELPEQWTSSRVRR) constitute a propeptide that is removed on maturation.

This sequence belongs to the attacin/sarcotoxin-2 family.

The protein localises to the secreted. Its function is as follows. Has antibacterial activity against both Gram-positive and Gram-negative bacteria. In Lonomia obliqua (Moth), this protein is Defense protein 3.